A 399-amino-acid polypeptide reads, in one-letter code: Ribonuclease D (399 aa).

In terms of domain architecture, 3'-5' exonuclease spans 31-197; the sequence is RVVTDNTALL…PLYHILEKEL (167 aa). In terms of domain architecture, HRDC spans 239–318; it reads NPLELSRLRV…SQARRISSND (80 aa).

The protein belongs to the RNase D family. It depends on a divalent metal cation as a cofactor.

Its subcellular location is the cytoplasm. It catalyses the reaction Exonucleolytic cleavage that removes extra residues from the 3'-terminus of tRNA to produce 5'-mononucleotides.. Exonuclease involved in the 3' processing of various precursor tRNAs. Initiates hydrolysis at the 3'-terminus of an RNA molecule and releases 5'-mononucleotides. This is Ribonuclease D from Haemophilus influenzae (strain ATCC 51907 / DSM 11121 / KW20 / Rd).